The chain runs to 127 residues: Small ribosomal subunit protein uS8m (127 aa).

The protein belongs to the universal ribosomal protein uS8 family.

The protein resides in the mitochondrion. The protein is Small ribosomal subunit protein uS8m (RPS8) of Acanthamoeba castellanii (Amoeba).